Here is a 452-residue protein sequence, read N- to C-terminus: Probable mannose-6-phosphate isomerase (452 aa).

Zn(2+) contacts are provided by Q141, H143, E168, and H295. Residue R314 is part of the active site.

It belongs to the mannose-6-phosphate isomerase type 1 family. The cofactor is Zn(2+).

Its subcellular location is the cytoplasm. It catalyses the reaction D-mannose 6-phosphate = D-fructose 6-phosphate. The protein operates within nucleotide-sugar biosynthesis; GDP-alpha-D-mannose biosynthesis; alpha-D-mannose 1-phosphate from D-fructose 6-phosphate: step 1/2. Involved in the synthesis of the GDP-mannose and dolichol-phosphate-mannose required for a number of critical mannosyl transfer reactions. The sequence is that of Probable mannose-6-phosphate isomerase (mpi) from Dictyostelium discoideum (Social amoeba).